A 210-amino-acid polypeptide reads, in one-letter code: UPF0637 protein RBAM_014510 (210 aa).

This sequence belongs to the UPF0637 family.

This chain is UPF0637 protein RBAM_014510, found in Bacillus velezensis (strain DSM 23117 / BGSC 10A6 / LMG 26770 / FZB42) (Bacillus amyloliquefaciens subsp. plantarum).